We begin with the raw amino-acid sequence, 467 residues long: UDP-N-acetylmuramate--L-alanine ligase (467 aa).

114-120 (GTHGKTT) is a binding site for ATP.

It belongs to the MurCDEF family.

It is found in the cytoplasm. It catalyses the reaction UDP-N-acetyl-alpha-D-muramate + L-alanine + ATP = UDP-N-acetyl-alpha-D-muramoyl-L-alanine + ADP + phosphate + H(+). The protein operates within cell wall biogenesis; peptidoglycan biosynthesis. Functionally, cell wall formation. The chain is UDP-N-acetylmuramate--L-alanine ligase from Rhodopseudomonas palustris (strain ATCC BAA-98 / CGA009).